Reading from the N-terminus, the 546-residue chain is Thermolysin (546 aa).

The signal sequence occupies residues 1–25; it reads MNKRAMLGAIGLAFGLMAWPFGASA. Residues 26 to 228 constitute a propeptide, activation peptide; that stretch reads KEKSMVWNEQ…EAKPGGGQPV (203 aa). The Ca(2+) site is built by D287, D289, Q291, and D368. H372 lines the Zn(2+) pocket. Residue E373 is part of the active site. Zn(2+) contacts are provided by H376 and E396. Ca(2+) is bound by residues E407, N413, D415, E417, E420, Y423, T424, I427, and D430. The Proton donor role is filled by H461.

The protein belongs to the peptidase M4 family. Requires Ca(2+) as cofactor. It depends on Zn(2+) as a cofactor.

The protein resides in the secreted. It carries out the reaction Preferential cleavage: Xaa-|-Leu &gt; Xaa-|-Phe.. Its function is as follows. Extracellular zinc metalloprotease. This Alicyclobacillus acidocaldarius subsp. acidocaldarius (Bacillus acidocaldarius) protein is Thermolysin.